Here is a 102-residue protein sequence, read N- to C-terminus: Protein translation factor SUI1 homolog (102 aa).

This sequence belongs to the SUI1 family.

The chain is Protein translation factor SUI1 homolog from Methanococcus maripaludis (strain C5 / ATCC BAA-1333).